Here is a 256-residue protein sequence, read N- to C-terminus: Type III pantothenate kinase (256 aa).

Position 7 to 14 (7 to 14 (DIGNTNVV)) interacts with ATP. 108 to 111 (GADC) contacts substrate. The active-site Proton acceptor is Asp110. Asp130 provides a ligand contact to K(+). ATP is bound at residue Thr133. Residue Thr185 coordinates substrate.

The protein belongs to the type III pantothenate kinase family. In terms of assembly, homodimer. NH4(+) is required as a cofactor. Requires K(+) as cofactor.

It is found in the cytoplasm. The catalysed reaction is (R)-pantothenate + ATP = (R)-4'-phosphopantothenate + ADP + H(+). It participates in cofactor biosynthesis; coenzyme A biosynthesis; CoA from (R)-pantothenate: step 1/5. Catalyzes the phosphorylation of pantothenate (Pan), the first step in CoA biosynthesis. The chain is Type III pantothenate kinase from Bifidobacterium adolescentis (strain ATCC 15703 / DSM 20083 / NCTC 11814 / E194a).